The chain runs to 477 residues: Glutamate--tRNA ligase 2 (477 aa).

The 'HIGH' region signature appears at 9–19 (PSPTGFLHIGG). The 'KMSKS' region motif lies at 238–242 (KLSKR). ATP is bound at residue lysine 241.

Belongs to the class-I aminoacyl-tRNA synthetase family. Glutamate--tRNA ligase type 1 subfamily. As to quaternary structure, monomer.

Its subcellular location is the cytoplasm. The catalysed reaction is tRNA(Glu) + L-glutamate + ATP = L-glutamyl-tRNA(Glu) + AMP + diphosphate. In terms of biological role, catalyzes the attachment of glutamate to tRNA(Glu) in a two-step reaction: glutamate is first activated by ATP to form Glu-AMP and then transferred to the acceptor end of tRNA(Glu). The sequence is that of Glutamate--tRNA ligase 2 from Paramagnetospirillum magneticum (strain ATCC 700264 / AMB-1) (Magnetospirillum magneticum).